A 137-amino-acid polypeptide reads, in one-letter code: Ribonuclease P protein component (137 aa).

Belongs to the RnpA family. In terms of assembly, consists of a catalytic RNA component (M1 or rnpB) and a protein subunit.

The catalysed reaction is Endonucleolytic cleavage of RNA, removing 5'-extranucleotides from tRNA precursor.. Its function is as follows. RNaseP catalyzes the removal of the 5'-leader sequence from pre-tRNA to produce the mature 5'-terminus. It can also cleave other RNA substrates such as 4.5S RNA. The protein component plays an auxiliary but essential role in vivo by binding to the 5'-leader sequence and broadening the substrate specificity of the ribozyme. The sequence is that of Ribonuclease P protein component from Porphyromonas gingivalis (strain ATCC BAA-308 / W83).